The following is a 479-amino-acid chain: Nuclear receptor subfamily 6 group A member 1 (479 aa).

A disordered region spans residues 1–32; that stretch reads MERDERPPSGGGGGGGSAGFLEPPAALPPPPR. Gly residues predominate over residues 9-18; sequence SGGGGGGGSA. Positions 57 to 132 form a DNA-binding region, nuclear receptor; that stretch reads QRTCLICGDR…MGMNRKAIRE (76 aa). 8 residues coordinate Zn(2+): Cys60, Cys63, Cys77, Cys80, Cys96, Cys102, Cys112, and Cys115. 2 NR C4-type zinc fingers span residues 60 to 80 and 96 to 120; these read CLIC…CEGC and CSRD…LLKC. Disordered regions lie at residues 131 to 150 and 162 to 198; these read REDG…QISE and FEEE…TLSS. The span at 165 to 177 shows a compositional bias: basic and acidic residues; sequence EANHWSNHGDSDH. The tract at residues 172 to 252 is sufficient for interaction with UIMC1; sequence HGDSDHSSPG…RSLDPQSYSL (81 aa). Positions 178–198 are enriched in polar residues; it reads SSPGNRASESNQPSPGSTLSS. The NR LBD domain maps to 248–479; the sequence is QSYSLIHQLV…HSCKTSVGKE (232 aa).

It belongs to the nuclear hormone receptor family. NR6 subfamily. Homodimer. Interacts with UIMC1.

Its subcellular location is the nucleus. In terms of biological role, orphan nuclear receptor that binds to a response element containing the sequence 5'-TCAAGGTCA-3'. Acts as a regulator of embryonic stem cell pluripotency by mediating repression of POU5F1/OCT4: binds to the DR0 element within the POU5F1/OCT4 promoter and inhibits POU5F1/OCT4 expression during embryonic stem cell differentiation. Involved in the regulation of gene expression in germ cell development during gametogenesis. The polypeptide is Nuclear receptor subfamily 6 group A member 1 (NR6A1) (Sus scrofa (Pig)).